The primary structure comprises 467 residues: MSKFPTVSEILSGKIVVGEKVTVRGWVRTRRDSKAGLSFLTVYDGSCFEPIQVIINNDLANYQTEILRLTAGCSVIVTGNIVESPASGQAVELQALEVEVVGWVDDPDTYPMAAKRHSIEYLREVAHLRPRTNLIGAVARVRHCLAQAIHRFFNGQGFYWVATPLITASDTEGAGEMFRVSTLDLENLPRTEHGKIDYSQDFFGKEAFLTVSGQLNGESYACALSKVYTFGPTFRAENSNTTRHLAEFWMVEPEFAFATLADNAKLAEDMLKYVFKAVLEERKDDMQFFAKHIDKEVITRLENFIAAPFAQVDYSDAIEILLKSGKKFEFPVAWGVDLSSEHERFLAEEHFKSPVVVKNYPKDIKAFYMRLNDDGKTVAAMDVLAPGIGEIIGGSQREERLAVLDSRMIEMGLNPEDYWWYRDLRKYGTVPHAGFGLGFERLIVYVTGLQNIREVIPFPRAPRNANF.

It belongs to the class-II aminoacyl-tRNA synthetase family. In terms of assembly, homodimer.

The protein resides in the cytoplasm. It catalyses the reaction tRNA(Asn) + L-asparagine + ATP = L-asparaginyl-tRNA(Asn) + AMP + diphosphate + H(+). This chain is Asparagine--tRNA ligase, found in Haemophilus ducreyi (strain 35000HP / ATCC 700724).